An 88-amino-acid chain; its full sequence is Large ribosomal subunit protein bL27 (88 aa).

The interval 1–24 is disordered; it reads MAHKKGTGSTRNGRDSNSKRLGVK.

Belongs to the bacterial ribosomal protein bL27 family.

In Prochlorococcus marinus (strain MIT 9313), this protein is Large ribosomal subunit protein bL27.